The primary structure comprises 436 residues: MLILSIGLIHHTSNKSLYTISPNKGKRYEPFTTTSLGNFQFHVVRFLHRLIYGTQRYQELFPPIQKIKNINNVKQQRIFPVNCAADDLDLGFGESDQIELFNHPSKDTYGQFNLIQLIDIFDPPQVHAPSSADEFFKSNKGSEHIDIFDMITRQPPPFHQHQLNIETPYFEDFATPLVLPPHEVSSDDVESYFSGSVSTVSSIEPLDDEFVPPPQPPRTHTSRKRKHDSISPPASSDSSSSSSYVPQLIPSSSSSVTSNGDSPVSPTTKRKYTKKKQPVFSNVDEPIVITTTTKTNNIDVKKITTTKNGTVENRFDCPSCDASFKVKGYLTRHLKKHSTSKAFECPFFDNHGVHGSKCHPTGGFSRRDTFKVHLRALHFIYPAGVKASQRNSFNGRCAGCFQYFDNNSEWLENHIEAGKCTGTVQYKQNVSNLLLD.

The interval 204–277 (EPLDDEFVPP…TKRKYTKKKQ (74 aa)) is disordered. A compositionally biased stretch (low complexity) spans 230–265 (ISPPASSDSSSSSSYVPQLIPSSSSSVTSNGDSPVS). Positions 268–277 (TKRKYTKKKQ) are enriched in basic residues. A C2H2-type zinc finger spans residues 315–337 (FDCPSCDASFKVKGYLTRHLKKH).

In terms of processing, activated by the amino acid-induced proteolytic removal of an N-terminal inhibitory domain.

The protein localises to the cell membrane. It is found in the nucleus. Transcription factor that activates genes required for degradation of extracellular protein and uptake of peptides such as the secreted aspartyl protease SAP2 or the oligopeptide transporter OPT1. Required for virulence. Synthesized as latent cytoplasmic precursor, which, upon a signal initiated by the plasma membrane SPS amino acid sensor system (including CSY1 and CSH3), becomes proteolytically activated and relocates to the nucleus, where it induces the expression of SPS-sensor-regulated genes. This is Transcriptional regulator STP3 (STP3) from Candida albicans (strain SC5314 / ATCC MYA-2876) (Yeast).